A 455-amino-acid polypeptide reads, in one-letter code: Glutamyl-tRNA reductase (455 aa).

Residues 49 to 52 (TCNR), S109, 114 to 116 (EAQ), and Q120 contribute to the substrate site. C50 functions as the Nucleophile in the catalytic mechanism. 190–195 (GAGAMG) lines the NADP(+) pocket.

It belongs to the glutamyl-tRNA reductase family. As to quaternary structure, homodimer.

It catalyses the reaction (S)-4-amino-5-oxopentanoate + tRNA(Glu) + NADP(+) = L-glutamyl-tRNA(Glu) + NADPH + H(+). Its pathway is porphyrin-containing compound metabolism; protoporphyrin-IX biosynthesis; 5-aminolevulinate from L-glutamyl-tRNA(Glu): step 1/2. Functionally, catalyzes the NADPH-dependent reduction of glutamyl-tRNA(Glu) to glutamate 1-semialdehyde (GSA). The protein is Glutamyl-tRNA reductase of Salinispora arenicola (strain CNS-205).